The sequence spans 35 residues: Cupiennin-2b (35 aa).

Glutamine 35 bears the Glutamine amide mark.

Expressed by the venom gland.

It is found in the secreted. The sequence is that of Cupiennin-2b from Cupiennius salei (American wandering spider).